Here is a 288-residue protein sequence, read N- to C-terminus: Aminoglycoside N(3)-acetyltransferase VII (288 aa).

It belongs to the antibiotic N-acetyltransferase family.

The enzyme catalyses a 2-deoxystreptamine antibiotic + acetyl-CoA = an N(3)-acetyl-2-deoxystreptamine antibiotic + CoA + H(+). Functionally, resistance to paromomycin. The chain is Aminoglycoside N(3)-acetyltransferase VII (aacC7) from Streptomyces paromomycinus (Streptomyces rimosus subsp. paromomycinus).